The chain runs to 380 residues: Chaperone protein DnaJ (380 aa).

One can recognise a J domain in the interval 5–70 (DYYEILGVAK…QKRAAYDQYG (66 aa)). A CR-type zinc finger spans residues 135–213 (GVSKEIRIPT…CHGHGRVEKS (79 aa)). Residues Cys148, Cys151, Cys165, Cys168, Cys187, Cys190, Cys201, and Cys204 each contribute to the Zn(2+) site. 4 CXXCXGXG motif repeats span residues 148-155 (CGVCHGSG), 165-172 (CSTCHGAG), 187-194 (CPTCHGRG), and 201-208 (CNACHGHG).

The protein belongs to the DnaJ family. Homodimer. Zn(2+) is required as a cofactor.

The protein resides in the cytoplasm. Functionally, participates actively in the response to hyperosmotic and heat shock by preventing the aggregation of stress-denatured proteins and by disaggregating proteins, also in an autonomous, DnaK-independent fashion. Unfolded proteins bind initially to DnaJ; upon interaction with the DnaJ-bound protein, DnaK hydrolyzes its bound ATP, resulting in the formation of a stable complex. GrpE releases ADP from DnaK; ATP binding to DnaK triggers the release of the substrate protein, thus completing the reaction cycle. Several rounds of ATP-dependent interactions between DnaJ, DnaK and GrpE are required for fully efficient folding. Also involved, together with DnaK and GrpE, in the DNA replication of plasmids through activation of initiation proteins. This is Chaperone protein DnaJ from Erwinia tasmaniensis (strain DSM 17950 / CFBP 7177 / CIP 109463 / NCPPB 4357 / Et1/99).